A 216-amino-acid chain; its full sequence is Protein Syd (216 aa).

Belongs to the Syd family.

The protein localises to the cell inner membrane. Its function is as follows. Interacts with the SecY protein in vivo. May bind preferentially to an uncomplexed state of SecY, thus functioning either as a chelating agent for excess SecY in the cell or as a regulatory factor that negatively controls the translocase function. The polypeptide is Protein Syd (Shewanella sp. (strain MR-4)).